A 427-amino-acid chain; its full sequence is Serine--tRNA ligase (427 aa).

Residue T236–E238 participates in L-serine binding. R267–E269 contacts ATP. Residue E290 coordinates L-serine. E354–S357 is a binding site for ATP. Residue S390 coordinates L-serine.

The protein belongs to the class-II aminoacyl-tRNA synthetase family. Type-1 seryl-tRNA synthetase subfamily. Homodimer. The tRNA molecule binds across the dimer.

Its subcellular location is the cytoplasm. The enzyme catalyses tRNA(Ser) + L-serine + ATP = L-seryl-tRNA(Ser) + AMP + diphosphate + H(+). It catalyses the reaction tRNA(Sec) + L-serine + ATP = L-seryl-tRNA(Sec) + AMP + diphosphate + H(+). It functions in the pathway aminoacyl-tRNA biosynthesis; selenocysteinyl-tRNA(Sec) biosynthesis; L-seryl-tRNA(Sec) from L-serine and tRNA(Sec): step 1/1. Its function is as follows. Catalyzes the attachment of serine to tRNA(Ser). Is also able to aminoacylate tRNA(Sec) with serine, to form the misacylated tRNA L-seryl-tRNA(Sec), which will be further converted into selenocysteinyl-tRNA(Sec). In Rippkaea orientalis (strain PCC 8801 / RF-1) (Cyanothece sp. (strain PCC 8801)), this protein is Serine--tRNA ligase.